The sequence spans 450 residues: FAD-dependent monooxygenase okaB (450 aa).

A helical transmembrane segment spans residues 14–34; the sequence is IVIIIVGLGIAGLSAAIECHG. Glutamate 43 and arginine 116 together coordinate FAD. Arginine 194 is a catalytic residue. FAD contacts are provided by aspartate 318 and glycine 331.

It belongs to the paxM FAD-dependent monooxygenase family.

Its subcellular location is the membrane. The catalysed reaction is cyclo(N(8)-(alpha,alpha-dimethylallyl)-L-Trp-6a-(alpha,alpha-dimethylallyl)-L-Trp) + AH2 + O2 = okaramine C + A + H2O. Its pathway is alkaloid biosynthesis. Functionally, FAD-dependent monooxygenase; part of the gene cluster that mediates the biosynthesis of okaramine B, a prenylated indole alkaloid that possesses an unusual octacyclic ring system, including a four-membered azetidine ring and an eight-membered azocine ring, and that exhibits insecticidal activity against silkworm larvae. Within the pathway, okaC performs indole 2,3-epoxidation, facilitating the formation of the hexahydropyrrolo[2,3-b]indole (HPI) moiety of okaramine C. okaC then performs asymmetric reverse prenylation of cyclo(L-Trp-L-Trp) at N-1 and C-2' of the indole ring to produce the cyclic prenylated tryptophan dimer cyclo(N8-(alpha,alpha-dimethylallyl)-L-Trp-6a-(alpha,alpha-dime-thylallyl)-L-Trp). The biosynthesis begins with the NRPS okaA that condenses two tryptophan molecules into cyclo(L-Trp-L-Trp). Prenylation by the prenyltransferase okaC then leads to the formation of cyclo(N8-(alpha,alpha-dimethylallyl)-L-Trp-6a-(alpha,alpha-dime-thylallyl)-L-Trp). This is followed by indole 2,3-epoxidation by the FAD-dependent monooxygenase okaB to facilitate the formation of the hexahydropyrrolo[2,3-b]indole (HPI) moiety of okaramine C. The cytochrome P450 monooxygenase okaD then likely catalyzes formation of the eight-membered ring of okaramine A. The dioxygenase okaE further forms the unusual 2-dimethyl-3-methyl-azetidine ring to yield 12-deshydroxyl okaramine E, as well as the hydroxylation of 12-deshydroxyl okaramine E to produce okaramine E. The cytochrome P450 monoxygenase okaG converts 12-deshydroxyl okaramine E into 3-desmethyl okaramine B which is further methylated by the methyltransferase okaF into okaramine B. In a shunt pathway, okaG and okaF together are also able to convert okaramine E into okaramine D. Okaramine H is produced by nonenzymatic conversion from okaramine A. In Penicillium ochrochloron, this protein is FAD-dependent monooxygenase okaB.